Reading from the N-terminus, the 485-residue chain is Ras-like GTPase YcjX (485 aa).

Positions G33 to T40 match the Walker A motif motif. GTP-binding residues include S35, G36, G38, K39, T40, A41, W110, S113, T114, R115, K355, D357, and H358. Residues G36, G38, K39, T40, A41, W110, S113, and T114 each contribute to the GDP site. Positions 355, 357, 358, 395, 396, and 397 each coordinate GDP. GTP is bound at residue I397.

In terms of assembly, monomer in solution. Mg(2+) serves as cofactor.

The enzyme catalyses GTP + H2O = GDP + phosphate + H(+). Alternates between an inactive form bound to GDP and an active form bound to GTP. Likely activated by a guanine nucleotide-exchange factor (GEF). Binds GTP and GDP. Has intrinsic GTPase activity. Does not hydrolyze ATP. May act as a transducer of stress responses. The protein is Ras-like GTPase YcjX of Shewanella oneidensis (strain ATCC 700550 / JCM 31522 / CIP 106686 / LMG 19005 / NCIMB 14063 / MR-1).